The following is a 712-amino-acid chain: Auxin response factor 15 (712 aa).

A DNA-binding region (TF-B3) is located at residues 142–244 (FCKTLTASDT…ELRLGVRRAA (103 aa)).

Belongs to the ARF family. As to quaternary structure, homo and heterodimers. In terms of tissue distribution, expressed in roots, culms, leaves and young panicles.

It localises to the nucleus. In terms of biological role, auxin response factors (ARFs) are transcriptional factors that bind specifically to the DNA sequence 5'-TGTCTC-3' found in the auxin-responsive promoter elements (AuxREs). The protein is Auxin response factor 15 (ARF15) of Oryza sativa subsp. japonica (Rice).